The following is a 579-amino-acid chain: Putative truncated flagellar export/assembly protein LfhA (579 aa).

Transmembrane regions (helical) follow at residues 86-106 (AIAG…IGIF), 124-144 (IGDG…AAII), and 177-197 (FVLA…SALL).

Belongs to the FHIPEP (flagella/HR/invasion proteins export pore) family.

The protein localises to the cell inner membrane. This chain is Putative truncated flagellar export/assembly protein LfhA, found in Escherichia coli (strain K12).